Reading from the N-terminus, the 448-residue chain is Maintenance of mitochondrial morphology protein 1 (448 aa).

At 1–74 (MTESVIYSGT…LNHTWSFTQG (74 aa)) the chain is on the lumenal side. Residues 75–95 (LVVGQLSVIVVVAIFIKFFVF) form a helical membrane-spanning segment. At 96-448 (ADSSATTTTT…IVDKTEEASI (353 aa)) the chain is on the cytoplasmic side. Disordered regions lie at residues 119-144 (RNKNVRGTSNEDKDPNNNKEDDLNSP) and 303-357 (LQNV…SQED). The span at 127 to 140 (SNEDKDPNNNKEDD) shows a compositional bias: basic and acidic residues. The SMP-LTD domain maps to 164–419 (SPESLDWFNV…EPRFQVVKVP (256 aa)). Low complexity predominate over residues 313–332 (PSNEPNSQNQTQQPTPVNNS). The span at 345 to 356 (ETKHSKAKRSQE) shows a compositional bias: basic and acidic residues.

Belongs to the MMM1 family. As to quaternary structure, homodimer. Component of the ER-mitochondria encounter structure (ERMES) or MDM complex, composed of MMM1, MDM10, MDM12 and MDM34. An MMM1 homodimer associates with one molecule of MDM12 on each side in a pairwise head-to-tail manner, and the SMP-LTD domains of MMM1 and MDM12 generate a continuous hydrophobic tunnel for phospholipid trafficking.

It is found in the endoplasmic reticulum membrane. In terms of biological role, component of the ERMES/MDM complex, which serves as a molecular tether to connect the endoplasmic reticulum (ER) and mitochondria. Components of this complex are involved in the control of mitochondrial shape and protein biogenesis, and function in nonvesicular lipid trafficking between the ER and mitochondria. The MDM12-MMM1 subcomplex functions in the major beta-barrel assembly pathway that is responsible for biogenesis of all outer membrane beta-barrel proteins, and acts in a late step after the SAM complex. The MDM10-MDM12-MMM1 subcomplex further acts in the TOM40-specific pathway after the action of the MDM12-MMM1 complex. Essential for establishing and maintaining the structure of mitochondria and maintenance of mtDNA nucleoids. In Debaryomyces hansenii (strain ATCC 36239 / CBS 767 / BCRC 21394 / JCM 1990 / NBRC 0083 / IGC 2968) (Yeast), this protein is Maintenance of mitochondrial morphology protein 1.